The primary structure comprises 198 residues: Suppressor of cytokine signaling 2 (198 aa).

The segment at 1–29 (MTLRCLEPSGNGADRTRSQWGTAGLPEEQ) is disordered. Positions 1 to 75 (MTLRCLEPSG…PEGTFLIRDS (75 aa)) are interaction with AREL1. At Ser-30 the chain carries Phosphoserine. In terms of domain architecture, SH2 spans 48–156 (WYWGSMTVNE…TVHLYLTKPL (109 aa)). At Ser-52 the chain carries Phosphoserine; by PKC. An SOCS box domain is found at 151-197 (YLTKPLYTSAPTLQHFCRLAINKCTGTIWGLPLPTRLKDYLEEYKFQ). Residue Lys-173 forms a Glycyl lysine isopeptide (Lys-Gly) (interchain with G-Cter in ubiquitin) linkage.

In terms of assembly, substrate-recognition component of the ECS(SOCS2) complex, composed of SOCS2, CUL5, ELOB, ELOC and RNF7/RBX2. Interacts with IGF1R. Interacts with DCUN1D1. Ubiquitinated; mediated by AREL1 and leading to its subsequent proteasomal degradation. Ubiquitination is dependent on phosphorylation at Ser-52, by PKC and is stimulated by LPS. In terms of processing, phosphorylation at Ser-52 by PKC facilitates its ubiquitination and proteasomal degradation. As to expression, expressed primarily in the testis, some expression in liver and lung.

It is found in the cytoplasm. Its pathway is protein modification; protein ubiquitination. In terms of biological role, substrate-recognition component of a cullin-5-RING E3 ubiquitin-protein ligase complex (ECS complex, also named CRL5 complex), which mediates the ubiquitination and subsequent proteasomal degradation of target proteins, such as EPOR and GHR. Specifically recognizes and binds phosphorylated proteins via its SH2 domain, promoting their ubiquitination. The ECS(SOCS2) complex acts as a key regulator of growth hormone receptor (GHR) levels by mediating ubiquitination and degradation of GHR, following GHR phosphorylation by JAK2. The ECS(SOCS2) also catalyzes ubiquitination and degradation of JAK2-phosphorylated EPOR. The sequence is that of Suppressor of cytokine signaling 2 from Mus musculus (Mouse).